The sequence spans 556 residues: 2-succinyl-5-enolpyruvyl-6-hydroxy-3-cyclohexene-1-carboxylate synthase (556 aa).

The protein belongs to the TPP enzyme family. MenD subfamily. In terms of assembly, homodimer. The cofactor is Mg(2+). Mn(2+) serves as cofactor. Thiamine diphosphate is required as a cofactor.

The catalysed reaction is isochorismate + 2-oxoglutarate + H(+) = 5-enolpyruvoyl-6-hydroxy-2-succinyl-cyclohex-3-ene-1-carboxylate + CO2. It functions in the pathway quinol/quinone metabolism; 1,4-dihydroxy-2-naphthoate biosynthesis; 1,4-dihydroxy-2-naphthoate from chorismate: step 2/7. It participates in quinol/quinone metabolism; menaquinone biosynthesis. Catalyzes the thiamine diphosphate-dependent decarboxylation of 2-oxoglutarate and the subsequent addition of the resulting succinic semialdehyde-thiamine pyrophosphate anion to isochorismate to yield 2-succinyl-5-enolpyruvyl-6-hydroxy-3-cyclohexene-1-carboxylate (SEPHCHC). This chain is 2-succinyl-5-enolpyruvyl-6-hydroxy-3-cyclohexene-1-carboxylate synthase, found in Shigella flexneri serotype 5b (strain 8401).